Reading from the N-terminus, the 195-residue chain is Recombination protein RecR (195 aa).

Residues 53-68 form a C4-type zinc finger; sequence CSVCFNIDVKSPCSIC. The region spanning 76–171 is the Toprim domain; that stretch reads QLLCIVEELG…KITRLACGIP (96 aa).

This sequence belongs to the RecR family.

Functionally, may play a role in DNA repair. It seems to be involved in an RecBC-independent recombinational process of DNA repair. It may act with RecF and RecO. This Ehrlichia canis (strain Jake) protein is Recombination protein RecR.